A 180-amino-acid chain; its full sequence is ATP synthase subunit delta (180 aa).

It belongs to the ATPase delta chain family. F-type ATPases have 2 components, F(1) - the catalytic core - and F(0) - the membrane proton channel. F(1) has five subunits: alpha(3), beta(3), gamma(1), delta(1), epsilon(1). F(0) has three main subunits: a(1), b(2) and c(10-14). The alpha and beta chains form an alternating ring which encloses part of the gamma chain. F(1) is attached to F(0) by a central stalk formed by the gamma and epsilon chains, while a peripheral stalk is formed by the delta and b chains.

The protein localises to the cell inner membrane. Its function is as follows. F(1)F(0) ATP synthase produces ATP from ADP in the presence of a proton or sodium gradient. F-type ATPases consist of two structural domains, F(1) containing the extramembraneous catalytic core and F(0) containing the membrane proton channel, linked together by a central stalk and a peripheral stalk. During catalysis, ATP synthesis in the catalytic domain of F(1) is coupled via a rotary mechanism of the central stalk subunits to proton translocation. Functionally, this protein is part of the stalk that links CF(0) to CF(1). It either transmits conformational changes from CF(0) to CF(1) or is implicated in proton conduction. This is ATP synthase subunit delta from Pelobacter propionicus (strain DSM 2379 / NBRC 103807 / OttBd1).